Consider the following 122-residue polypeptide: MIQSFTRLAVADNSGAKELMCIKVLGGSKRRYATVGDVIVASVKKALPNGKVKKGQVVKAVIVRTKKEIHRDNGSLIRFDENAAVILDAKREPIGTRIFGPVGREVRYGGFMKIVSLAPEVL.

It belongs to the universal ribosomal protein uL14 family. Part of the 50S ribosomal subunit. Forms a cluster with proteins L3 and L19. In the 70S ribosome, L14 and L19 interact and together make contacts with the 16S rRNA in bridges B5 and B8.

In terms of biological role, binds to 23S rRNA. Forms part of two intersubunit bridges in the 70S ribosome. This Campylobacter lari (strain RM2100 / D67 / ATCC BAA-1060) protein is Large ribosomal subunit protein uL14.